A 508-amino-acid polypeptide reads, in one-letter code: Splicing regulatory glutamine/lysine-rich protein 1 (508 aa).

In terms of domain architecture, RRM spans 66-142; the sequence is RTVYVGNLNS…RPLKINHSNN (77 aa). Ser171 and Ser184 each carry phosphoserine. The interval 173–508 is disordered; that stretch reads ISAAIEPESG…ENLSTKTEAV (336 aa). Over residues 180–189 the composition is skewed to basic and acidic residues; it reads ESGKSNERKG. Residues 190–259 show a composition bias toward basic residues; it reads GRSRSHTRSK…KSRSRSHSRD (70 aa). The segment covering 260-355 has biased composition (basic and acidic residues); that stretch reads KRKDTREKIK…DRSKEIDEKR (96 aa). At Thr363 the chain carries Phosphothreonine. The span at 372 to 388 shows a compositional bias: basic residues; that stretch reads RRSRSSSRERRRRRSRS. A compositionally biased stretch (basic and acidic residues) spans 419–488; that stretch reads REKERDHISE…DAPRTEENKI (70 aa). The segment covering 489–508 has biased composition (polar residues); that stretch reads QHNGNCQLNEENLSTKTEAV. Residue Lys504 forms a Glycyl lysine isopeptide (Lys-Gly) (interchain with G-Cter in SUMO2) linkage.

This sequence belongs to the splicing factor SR family. In terms of assembly, homodimer. Binds SFRS1, SFRS2, SFRS3 and SFRS6. Interacts with the spliceosome. Interacts with SREK1IP1.

Its subcellular location is the nucleus. Functionally, participates in the regulation of alternative splicing by modulating the activity of other splice facors. Inhibits the splicing activity of SFRS1, SFRS2 and SFRS6. Augments the splicing activity of SFRS3. This is Splicing regulatory glutamine/lysine-rich protein 1 (SREK1) from Homo sapiens (Human).